The following is a 464-amino-acid chain: uncharacterized protein (464 aa).

The first 24 residues, 1–24 (MSRFVPRIIPFYLLLLVAGGTANA), serve as a signal peptide directing secretion.

It belongs to the intimin/invasin family.

The protein resides in the periplasm. This is an uncharacterized protein from Escherichia coli (strain K12).